Consider the following 305-residue polypeptide: Recombination-associated protein RdgC (305 aa).

Belongs to the RdgC family.

The protein localises to the cytoplasm. The protein resides in the nucleoid. May be involved in recombination. This chain is Recombination-associated protein RdgC, found in Sodalis glossinidius (strain morsitans).